The following is a 213-amino-acid chain: Thymidine kinase (213 aa).

Residues 20-27 and 93-96 each bind ATP; these read GPMFSGKT and DEAQ. The Proton acceptor role is filled by E94. Zn(2+)-binding residues include C150, C153, C185, and H188.

This sequence belongs to the thymidine kinase family. As to quaternary structure, homotetramer.

Its subcellular location is the cytoplasm. The catalysed reaction is thymidine + ATP = dTMP + ADP + H(+). The sequence is that of Thymidine kinase from Mycoplasma genitalium (strain ATCC 33530 / DSM 19775 / NCTC 10195 / G37) (Mycoplasmoides genitalium).